Here is a 292-residue protein sequence, read N- to C-terminus: 11-beta-hydroxysteroid dehydrogenase 1 (292 aa).

The helical transmembrane segment at 7–24 threads the bilayer; the sequence is YLLPILGIFLAYYYYSAN.

It belongs to the short-chain dehydrogenases/reductases (SDR) family. Homodimer. In terms of tissue distribution, expressed highest in liver and ovaries (corpora lutea, granulosa cells, thecal, uterine caruncle and intercarunculer tissues), lower expression in kidney and spleen, and lowest in the adrenal.

It localises to the endoplasmic reticulum membrane. The enzyme catalyses an 11beta-hydroxysteroid + NADP(+) = an 11-oxosteroid + NADPH + H(+). It carries out the reaction corticosterone + NADP(+) = 11-dehydrocorticosterone + NADPH + H(+). It catalyses the reaction cortisone + NADPH + H(+) = cortisol + NADP(+). The catalysed reaction is a 7beta-hydroxysteroid + NADP(+) = a 7-oxosteroid + NADPH + H(+). The enzyme catalyses 7-oxocholesterol + NADPH + H(+) = 7beta-hydroxycholesterol + NADP(+). It carries out the reaction chenodeoxycholate + NADP(+) = 7-oxolithocholate + NADPH + H(+). It catalyses the reaction 7-oxolithocholate + NADPH + H(+) = ursodeoxycholate + NADP(+). The catalysed reaction is glycochenodeoxycholate + NADP(+) = 7-oxoglycolithocholate + NADPH + H(+). The enzyme catalyses taurochenodeoxycholate + NADP(+) = 7-oxotaurolithocholate + NADPH + H(+). It carries out the reaction tauroursodeoxycholate + NADP(+) = 7-oxotaurolithocholate + NADPH + H(+). It catalyses the reaction glycoursodeoxycholate + NADP(+) = 7-oxoglycolithocholate + NADPH + H(+). The catalysed reaction is 7-oxopregnenolone + NADPH + H(+) = 7beta-hydroxypregnenolone + NADP(+). The enzyme catalyses 3beta,7alpha-dihydroxyandrost-5-en-17-one + NADP(+) = 3beta-hydroxy-5-androstene-7,17-dione + NADPH + H(+). It carries out the reaction 3beta-hydroxy-5-androstene-7,17-dione + NADPH + H(+) = 3beta,7beta-dihydroxyandrost-5-en-17-one + NADP(+). It catalyses the reaction 3beta-hydroxy-5alpha-androstane-7,17-dione + NADPH + H(+) = 3beta,7beta-dihydroxy-5alpha-androstan-17-one + NADP(+). Its function is as follows. Controls the reversible conversion of biologically active glucocorticoids such as cortisone to cortisol, and 11-dehydrocorticosterone to corticosterone in the presence of NADP(H). Participates in the corticosteroid receptor-mediated anti-inflammatory response, as well as metabolic and homeostatic processes. Plays a role in the secretion of aqueous humor in the eye, maintaining a normotensive, intraocular environment. Bidirectional in vitro, predominantly functions as a reductase in vivo, thereby increasing the concentration of active glucocorticoids. It has broad substrate specificity, besides glucocorticoids, it accepts other steroid and sterol substrates. Interconverts 7-oxo- and 7-hydroxy-neurosteroids such as 7-oxopregnenolone and 7beta-hydroxypregnenolone, 7-oxodehydroepiandrosterone (3beta-hydroxy-5-androstene-7,17-dione) and 7beta-hydroxydehydroepiandrosterone (3beta,7beta-dihydroxyandrost-5-en-17-one), among others. Catalyzes the stereo-specific conversion of the major dietary oxysterol, 7-ketocholesterol (7-oxocholesterol), into the more polar 7-beta-hydroxycholesterol metabolite. 7-oxocholesterol is one of the most important oxysterols, it participates in several events such as induction of apoptosis, accumulation in atherosclerotic lesions, lipid peroxidation, and induction of foam cell formation. Mediates the 7-oxo reduction of 7-oxolithocholate mainly to chenodeoxycholate, and to a lesser extent to ursodeoxycholate, both in its free form and when conjugated to glycine or taurine, providing a link between glucocorticoid activation and bile acid metabolism. Catalyzes the synthesis of 7-beta-25-dihydroxycholesterol from 7-oxo-25-hydroxycholesterol in vitro, which acts as a ligand for the G-protein-coupled receptor (GPCR) Epstein-Barr virus-induced gene 2 (EBI2) and may thereby regulate immune cell migration. The sequence is that of 11-beta-hydroxysteroid dehydrogenase 1 from Bos taurus (Bovine).